A 444-amino-acid polypeptide reads, in one-letter code: Tol-Pal system protein TolB (444 aa).

Positions 1–26 (MNLFRSLAPMGLALALLLPAAAPALA) are cleaved as a signal peptide. Over residues 287–310 (ASGTRRQLTNSPSIETAPSYSPDG) the composition is skewed to polar residues. The tract at residues 287-311 (ASGTRRQLTNSPSIETAPSYSPDGS) is disordered.

This sequence belongs to the TolB family. The Tol-Pal system is composed of five core proteins: the inner membrane proteins TolA, TolQ and TolR, the periplasmic protein TolB and the outer membrane protein Pal. They form a network linking the inner and outer membranes and the peptidoglycan layer.

It is found in the periplasm. Functionally, part of the Tol-Pal system, which plays a role in outer membrane invagination during cell division and is important for maintaining outer membrane integrity. The protein is Tol-Pal system protein TolB of Cereibacter sphaeroides (strain ATCC 17025 / ATH 2.4.3) (Rhodobacter sphaeroides).